We begin with the raw amino-acid sequence, 58 residues long: UPF0391 membrane protein ABO_0024 (58 aa).

2 consecutive transmembrane segments (helical) span residues 4–24 and 28–48; these read WALT…GGIA and ASIA…SLVV.

The protein belongs to the UPF0391 family.

It localises to the cell membrane. This is UPF0391 membrane protein ABO_0024 from Alcanivorax borkumensis (strain ATCC 700651 / DSM 11573 / NCIMB 13689 / SK2).